Reading from the N-terminus, the 266-residue chain is Glucosamine-6-phosphate deaminase (266 aa).

The active-site Proton acceptor; for enolization step is the D72. The active-site For ring-opening step is the D141. H143 (proton acceptor; for ring-opening step) is an active-site residue. E148 acts as the For ring-opening step in catalysis.

It belongs to the glucosamine/galactosamine-6-phosphate isomerase family. NagB subfamily. Homohexamer.

The catalysed reaction is alpha-D-glucosamine 6-phosphate + H2O = beta-D-fructose 6-phosphate + NH4(+). It participates in amino-sugar metabolism; N-acetylneuraminate degradation; D-fructose 6-phosphate from N-acetylneuraminate: step 5/5. Its activity is regulated as follows. Allosterically activated by N-acetylglucosamine 6-phosphate (GlcNAc6P). Catalyzes the reversible isomerization-deamination of glucosamine 6-phosphate (GlcN6P) to form fructose 6-phosphate (Fru6P) and ammonium ion. The protein is Glucosamine-6-phosphate deaminase of Yersinia enterocolitica serotype O:8 / biotype 1B (strain NCTC 13174 / 8081).